A 466-amino-acid chain; its full sequence is Ribulose bisphosphate carboxylase large chain (466 aa).

N6,N6,N6-trimethyllysine is present on Lys5. Substrate contacts are provided by Asn114 and Thr164. Lys166 functions as the Proton acceptor in the catalytic mechanism. Residue Lys168 coordinates substrate. Lys192, Asp194, and Glu195 together coordinate Mg(2+). Position 192 is an N6-carboxylysine (Lys192). His285 functions as the Proton acceptor in the catalytic mechanism. 3 residues coordinate substrate: Arg286, His318, and Ser370.

The protein belongs to the RuBisCO large chain family. Type I subfamily. Heterohexadecamer of 8 large chains and 8 small chains; disulfide-linked. The disulfide link is formed within the large subunit homodimers. It depends on Mg(2+) as a cofactor. In terms of processing, the disulfide bond which can form in the large chain dimeric partners within the hexadecamer appears to be associated with oxidative stress and protein turnover.

The protein resides in the plastid. Its subcellular location is the chloroplast. It carries out the reaction 2 (2R)-3-phosphoglycerate + 2 H(+) = D-ribulose 1,5-bisphosphate + CO2 + H2O. The catalysed reaction is D-ribulose 1,5-bisphosphate + O2 = 2-phosphoglycolate + (2R)-3-phosphoglycerate + 2 H(+). Its function is as follows. RuBisCO catalyzes two reactions: the carboxylation of D-ribulose 1,5-bisphosphate, the primary event in carbon dioxide fixation, as well as the oxidative fragmentation of the pentose substrate in the photorespiration process. Both reactions occur simultaneously and in competition at the same active site. The sequence is that of Ribulose bisphosphate carboxylase large chain from Asarum canadense (Wild ginger).